The sequence spans 659 residues: tRNA-guanine(15) transglycosylase (659 aa).

Asp-84 serves as the catalytic Nucleophile. 2 residues coordinate substrate: Asp-119 and Ala-190. Zn(2+)-binding residues include Cys-273, Cys-275, and Cys-278. Residues 583–658 (KNRVVVNKDS…QAIKTRKGMK (76 aa)) form the PUA domain.

The protein belongs to the archaeosine tRNA-ribosyltransferase family. It depends on Zn(2+) as a cofactor.

It carries out the reaction guanosine(15) in tRNA + 7-cyano-7-deazaguanine = 7-cyano-7-carbaguanosine(15) in tRNA + guanine. It participates in tRNA modification; archaeosine-tRNA biosynthesis. Functionally, exchanges the guanine residue with 7-cyano-7-deazaguanine (preQ0) at position 15 in the dihydrouridine loop (D-loop) of archaeal tRNAs. The polypeptide is tRNA-guanine(15) transglycosylase (Methanobrevibacter smithii (strain ATCC 35061 / DSM 861 / OCM 144 / PS)).